The sequence spans 759 residues: Protein YdeP (759 aa).

The [4Fe-4S] cluster site is built by C49 and C52.

This sequence belongs to the prokaryotic molybdopterin-containing oxidoreductase family. The cofactor is [4Fe-4S] cluster. Requires Mo-bis(molybdopterin guanine dinucleotide) as cofactor.

Probably involved in acid resistance. In Escherichia coli O6:H1 (strain CFT073 / ATCC 700928 / UPEC), this protein is Protein YdeP (ydeP).